Consider the following 213-residue polypeptide: Thymidylate kinase (213 aa).

10 to 17 serves as a coordination point for ATP; sequence GLEGAGKT.

It belongs to the thymidylate kinase family.

It carries out the reaction dTMP + ATP = dTDP + ADP. Functionally, phosphorylation of dTMP to form dTDP in both de novo and salvage pathways of dTTP synthesis. This is Thymidylate kinase from Escherichia coli O157:H7 (strain EC4115 / EHEC).